A 792-amino-acid chain; its full sequence is 5-methyltetrahydropteroyltriglutamate--homocysteine methyltransferase (792 aa).

5-methyltetrahydropteroyltri-L-glutamate contacts are provided by residues arginine 16–lysine 19 and lysine 112. Residues isoleucine 432 to serine 434 and glutamate 485 contribute to the L-homocysteine site. L-methionine is bound by residues isoleucine 432 to serine 434 and glutamate 485. Residues arginine 516–cysteine 517 and tryptophan 562 contribute to the 5-methyltetrahydropteroyltri-L-glutamate site. L-homocysteine is bound at residue aspartate 600. Aspartate 600 provides a ligand contact to L-methionine. Glutamate 606 is a binding site for 5-methyltetrahydropteroyltri-L-glutamate. 3 residues coordinate Zn(2+): histidine 642, cysteine 644, and glutamate 666. The active-site Proton donor is the histidine 695. Cysteine 727 lines the Zn(2+) pocket.

Belongs to the vitamin-B12 independent methionine synthase family. The cofactor is Zn(2+).

The enzyme catalyses 5-methyltetrahydropteroyltri-L-glutamate + L-homocysteine = tetrahydropteroyltri-L-glutamate + L-methionine. The protein operates within amino-acid biosynthesis; L-methionine biosynthesis via de novo pathway; L-methionine from L-homocysteine (MetE route): step 1/1. Its function is as follows. Catalyzes the transfer of a methyl group from 5-methyltetrahydrofolate to homocysteine resulting in methionine formation. The sequence is that of 5-methyltetrahydropteroyltriglutamate--homocysteine methyltransferase from Cupriavidus necator (strain ATCC 17699 / DSM 428 / KCTC 22496 / NCIMB 10442 / H16 / Stanier 337) (Ralstonia eutropha).